The sequence spans 371 residues: METVNVNLGKRSYPIYAGPGILQDLGELLGGLPVGRKVLLISNPTVFSLYGEKAAESLARAGFTVAVAEIGDGEEHKTLATAGRLYDRAFEAGLDRRSSIVALGGGVVGDVAGFVAATYMRGISFVQVPTTLLAQVDSSVGGKVAVNHPRGKNIIGAFYQPRLVLADVDTLKTLPVRQMRSGLAEVIKYGVIWSREFFAWLEQNIEALLNGEAGALAYAVRESCRIKAQVVEQDETEQGLRAVLNYGHTVGHAVEALTHYRVYTHGEAVGIGMAVEAGLAVALGMLKRSEGGRIIRLIRQAGLPEGLPEGLPPEKTVEKFYHDKKAVEGQLTFVLPERIGRAVVKNGLAKNFLLEFLSAGYGLLERGAGRV.

NAD(+) contacts are provided by residues 72-77, 106-110, 130-131, Lys-143, Lys-152, and 170-173; these read DGEEHK, GVVGD, TT, and TLKT. Positions 185, 248, and 265 each coordinate Zn(2+).

The protein belongs to the sugar phosphate cyclases superfamily. Dehydroquinate synthase family. Co(2+) is required as a cofactor. Requires Zn(2+) as cofactor. The cofactor is NAD(+).

Its subcellular location is the cytoplasm. It carries out the reaction 7-phospho-2-dehydro-3-deoxy-D-arabino-heptonate = 3-dehydroquinate + phosphate. The protein operates within metabolic intermediate biosynthesis; chorismate biosynthesis; chorismate from D-erythrose 4-phosphate and phosphoenolpyruvate: step 2/7. Catalyzes the conversion of 3-deoxy-D-arabino-heptulosonate 7-phosphate (DAHP) to dehydroquinate (DHQ). This is 3-dehydroquinate synthase from Pelotomaculum thermopropionicum (strain DSM 13744 / JCM 10971 / SI).